Consider the following 447-residue polypeptide: Tubulin beta-1 chain (447 aa).

Position 11 (Gln11) interacts with GTP. Ser40 carries the phosphoserine modification. The GTP site is built by Glu69, Ser138, Gly142, Thr143, Gly144, Asn204, and Asn226. Residue Glu69 participates in Mg(2+) binding. Ser339 carries the post-translational modification Phosphoserine. A disordered region spans residues 427–447; that stretch reads EATADEDAEFEEEQEAEVDEN. A compositionally biased stretch (acidic residues) spans 429–447; that stretch reads TADEDAEFEEEQEAEVDEN.

The protein belongs to the tubulin family. As to quaternary structure, dimer of alpha and beta chains. A typical microtubule is a hollow water-filled tube with an outer diameter of 25 nm and an inner diameter of 15 nM. Alpha-beta heterodimers associate head-to-tail to form protofilaments running lengthwise along the microtubule wall with the beta-tubulin subunit facing the microtubule plus end conferring a structural polarity. Microtubules usually have 13 protofilaments but different protofilament numbers can be found in some organisms and specialized cells. Interacts with mgr and Vhl. The cofactor is Mg(2+).

The protein resides in the cytoplasm. It is found in the cytoskeleton. Its function is as follows. Tubulin is the major constituent of microtubules, a cylinder consisting of laterally associated linear protofilaments composed of alpha- and beta-tubulin heterodimers. Microtubules grow by the addition of GTP-tubulin dimers to the microtubule end, where a stabilizing cap forms. Below the cap, tubulin dimers are in GDP-bound state, owing to GTPase activity of alpha-tubulin. The sequence is that of Tubulin beta-1 chain (betaTub56D) from Drosophila melanogaster (Fruit fly).